The sequence spans 235 residues: 7-cyano-7-deazaguanine synthase (235 aa).

Residue 16–26 (FSGGQDSTTCL) participates in ATP binding. Residues Cys193, Cys201, Cys204, and Cys207 each contribute to the Zn(2+) site.

This sequence belongs to the QueC family. Zn(2+) serves as cofactor.

It catalyses the reaction 7-carboxy-7-deazaguanine + NH4(+) + ATP = 7-cyano-7-deazaguanine + ADP + phosphate + H2O + H(+). It functions in the pathway purine metabolism; 7-cyano-7-deazaguanine biosynthesis. In terms of biological role, catalyzes the ATP-dependent conversion of 7-carboxy-7-deazaguanine (CDG) to 7-cyano-7-deazaguanine (preQ(0)). The protein is 7-cyano-7-deazaguanine synthase of Actinobacillus succinogenes (strain ATCC 55618 / DSM 22257 / CCUG 43843 / 130Z).